A 490-amino-acid chain; its full sequence is Dual specificity protein kinase CLK3 (490 aa).

The interval 1-138 (MHHCKRYRSP…SKRSSRSVED (138 aa)) is disordered. Phosphotyrosine is present on tyrosine 7. Residues serine 9, serine 49, serine 51, serine 67, serine 76, and serine 78 each carry the phosphoserine modification. Basic and acidic residues-rich tracts occupy residues 26 to 56 (YSREHEGRLRYPSRREPPPRRSRSRSHDRLP) and 63 to 76 (ERRDSDTYRCEERS). Basic residues predominate over residues 88–116 (RSRHRRRSRERGPYRTRKHAHHCHKRRTR). A compositionally biased stretch (low complexity) spans 117–130 (SCSSASSRSQQSSK). Phosphoserine is present on serine 135. The Protein kinase domain maps to 156–472 (YEIVGNLGEG…LAEALLHPFF (317 aa)). ATP contacts are provided by residues 162-170 (LGEGTFGKV) and lysine 186. Aspartate 283 serves as the catalytic Proton acceptor.

The protein belongs to the protein kinase superfamily. CMGC Ser/Thr protein kinase family. Lammer subfamily. Autophosphorylates on all three types of residues. Endothelial cells.

It is found in the nucleus. It localises to the cytoplasm. The protein localises to the cytoplasmic vesicle. The protein resides in the secretory vesicle. Its subcellular location is the acrosome. It is found in the nucleus speckle. The enzyme catalyses L-seryl-[protein] + ATP = O-phospho-L-seryl-[protein] + ADP + H(+). It catalyses the reaction L-threonyl-[protein] + ATP = O-phospho-L-threonyl-[protein] + ADP + H(+). It carries out the reaction L-tyrosyl-[protein] + ATP = O-phospho-L-tyrosyl-[protein] + ADP + H(+). With respect to regulation, leucettine L41 inhibits its kinase activity and affects the regulation of alternative splicing mediated by phosphorylation of SR proteins. Dual specificity kinase acting on both serine/threonine and tyrosine-containing substrates. Phosphorylates serine- and arginine-rich (SR) proteins of the spliceosomal complex. May be a constituent of a network of regulatory mechanisms that enable SR proteins to control RNA splicing and can cause redistribution of SR proteins from speckles to a diffuse nucleoplasmic distribution. Phosphorylates SRSF1 and SRSF3. Regulates the alternative splicing of tissue factor (F3) pre-mRNA in endothelial cells. The sequence is that of Dual specificity protein kinase CLK3 from Homo sapiens (Human).